Here is a 393-residue protein sequence, read N- to C-terminus: Riboflavin biosynthesis protein RibBA (393 aa).

The tract at residues 1 to 200 (MQFDNIDSAL…IDDLIEYRKK (200 aa)) is DHBP synthase. D-ribulose 5-phosphate is bound by residues 27-28 (RE), Asp-32, 139-143 (RNGHT), and Glu-163. Glu-28 contributes to the Mg(2+) binding site. Residue His-142 coordinates Mg(2+). The tract at residues 201-393 (LEPEIEFKAK…TKKIKMGHLI (193 aa)) is GTP cyclohydrolase II. 249 to 253 (RLHSA) lines the GTP pocket. The Zn(2+) site is built by Cys-254, Cys-265, and Cys-267. GTP contacts are provided by residues Gln-270, 291-293 (EGR), and Thr-313. Asp-325 serves as the catalytic Proton acceptor; for GTP cyclohydrolase activity. The active-site Nucleophile; for GTP cyclohydrolase activity is the Arg-327. Residues Ser-348 and Lys-353 each contribute to the GTP site.

In the N-terminal section; belongs to the DHBP synthase family. It in the C-terminal section; belongs to the GTP cyclohydrolase II family. Mg(2+) serves as cofactor. Requires Mn(2+) as cofactor. It depends on Zn(2+) as a cofactor.

The catalysed reaction is D-ribulose 5-phosphate = (2S)-2-hydroxy-3-oxobutyl phosphate + formate + H(+). It carries out the reaction GTP + 4 H2O = 2,5-diamino-6-hydroxy-4-(5-phosphoribosylamino)-pyrimidine + formate + 2 phosphate + 3 H(+). It functions in the pathway cofactor biosynthesis; riboflavin biosynthesis; 2-hydroxy-3-oxobutyl phosphate from D-ribulose 5-phosphate: step 1/1. The protein operates within cofactor biosynthesis; riboflavin biosynthesis; 5-amino-6-(D-ribitylamino)uracil from GTP: step 1/4. Its function is as follows. Catalyzes the conversion of D-ribulose 5-phosphate to formate and 3,4-dihydroxy-2-butanone 4-phosphate. Catalyzes the conversion of GTP to 2,5-diamino-6-ribosylamino-4(3H)-pyrimidinone 5'-phosphate (DARP), formate and pyrophosphate. The protein is Riboflavin biosynthesis protein RibBA of Staphylococcus aureus (strain Mu50 / ATCC 700699).